The following is a 337-amino-acid chain: Protein ABHD13 (337 aa).

Residues 37–57 (FHLYGGIILLLLIFISIAGIL) form a helical; Signal-anchor for type II membrane protein membrane-spanning segment. Active-site charge relay system residues include serine 193, aspartate 268, and histidine 298. A glycan (N-linked (GlcNAc...) asparagine) is linked at asparagine 299.

Belongs to the serine esterase family.

Its subcellular location is the membrane. In Homo sapiens (Human), this protein is Protein ABHD13.